A 907-amino-acid chain; its full sequence is Aldehyde oxidoreductase (907 aa).

Positions I2 to V79 constitute a 2Fe-2S ferredoxin-type domain. Residues C40, C45, C48, C60, C100, C103, C137, and C139 each coordinate [2Fe-2S] cluster. Residues H653 and E869 each coordinate Mo-molybdopterin cytosine dinucleotide.

This sequence belongs to the xanthine dehydrogenase family. Homodimer. Mo-molybdopterin cytosine dinucleotide serves as cofactor. It depends on [2Fe-2S] cluster as a cofactor.

The enzyme catalyses an aldehyde + A + H2O = a carboxylate + AH2 + H(+). The chain is Aldehyde oxidoreductase (mop) from Megalodesulfovibrio gigas (Desulfovibrio gigas).